The following is a 277-amino-acid chain: Large ribosomal subunit protein uL2 (277 aa).

A disordered region spans residues 222–277 (GSVMNPNDHPHGGGEGKSPVGHPGPLTPWGKPALGLKTRKNKKYSDKFIIKRKNKK).

Belongs to the universal ribosomal protein uL2 family. In terms of assembly, part of the 50S ribosomal subunit. Forms a bridge to the 30S subunit in the 70S ribosome.

Functionally, one of the primary rRNA binding proteins. Required for association of the 30S and 50S subunits to form the 70S ribosome, for tRNA binding and peptide bond formation. It has been suggested to have peptidyltransferase activity; this is somewhat controversial. Makes several contacts with the 16S rRNA in the 70S ribosome. This Clostridium kluyveri (strain NBRC 12016) protein is Large ribosomal subunit protein uL2.